The sequence spans 244 residues: ATP synthase subunit a, chloroplastic (244 aa).

5 helical membrane passes run 35–55 (QVLI…VIAV), 92–112 (VPFI…GALL), 131–151 (INTT…AGLS), 196–216 (LVVV…VMFL), and 217–237 (GLFT…AYIG).

Belongs to the ATPase A chain family. F-type ATPases have 2 components, CF(1) - the catalytic core - and CF(0) - the membrane proton channel. CF(1) has five subunits: alpha(3), beta(3), gamma(1), delta(1), epsilon(1). CF(0) has four main subunits: a, b, b' and c.

It localises to the plastid. Its subcellular location is the chloroplast thylakoid membrane. Functionally, key component of the proton channel; it plays a direct role in the translocation of protons across the membrane. The protein is ATP synthase subunit a, chloroplastic of Gossypium hirsutum (Upland cotton).